We begin with the raw amino-acid sequence, 271 residues long: Putative phosphoenolpyruvate synthase regulatory protein (271 aa).

Residue 152 to 159 (GVSRSGKT) participates in ADP binding.

The protein belongs to the pyruvate, phosphate/water dikinase regulatory protein family. PSRP subfamily.

It catalyses the reaction [pyruvate, water dikinase] + ADP = [pyruvate, water dikinase]-phosphate + AMP + H(+). The enzyme catalyses [pyruvate, water dikinase]-phosphate + phosphate + H(+) = [pyruvate, water dikinase] + diphosphate. Its function is as follows. Bifunctional serine/threonine kinase and phosphorylase involved in the regulation of the phosphoenolpyruvate synthase (PEPS) by catalyzing its phosphorylation/dephosphorylation. The chain is Putative phosphoenolpyruvate synthase regulatory protein from Dichelobacter nodosus (strain VCS1703A).